The primary structure comprises 333 residues: Type II secretion system protein K (333 aa).

The propeptide at 1–7 (MRRGQNG) is leader sequence. The chain crosses the membrane as a helical span at residues 8-29 (VALITVLLVVAVVTIVCAGLII). At 30-333 (RQQLAIRSSA…GGDDWKKDER (304 aa)) the chain is on the periplasmic side. A disordered region spans residues 313-333 (MGQGGLPIPSTGGDDWKKDER).

The protein belongs to the GSP K family. As to quaternary structure, type II secretion is composed of four main components: the outer membrane complex, the inner membrane complex, the cytoplasmic secretion ATPase and the periplasm-spanning pseudopilus. Interacts with the tip of the type II pseudopilus subunits XcpV, XcpU and XcpW. Interacts with core component XcpT. Post-translationally, cleaved by prepilin peptidase.

The protein resides in the cell inner membrane. In terms of biological role, component of the type II secretion system required for the energy-dependent secretion of extracellular factors such as proteases and toxins from the periplasm. Plays a role in pseudopilus assembly and seems to control its length. Interacts with the pseudopilus tip complex that is critical for the recognition and binding of secretion substrates. Type II pseudopilus confers increased bacterial adhesive capabilities. This Pseudomonas aeruginosa (strain ATCC 15692 / DSM 22644 / CIP 104116 / JCM 14847 / LMG 12228 / 1C / PRS 101 / PAO1) protein is Type II secretion system protein K (xcpX).